The following is a 283-amino-acid chain: Putative S-adenosyl-L-methionine-dependent methyltransferase SAV_474/SAV474 (283 aa).

Residues aspartate 121 and 150 to 151 contribute to the S-adenosyl-L-methionine site; that span reads DL. Positions 258-283 are disordered; sequence AAYGRPISTPPQREERPGGLISAVRR.

Belongs to the UPF0677 family.

Functionally, exhibits S-adenosyl-L-methionine-dependent methyltransferase activity. The sequence is that of Putative S-adenosyl-L-methionine-dependent methyltransferase SAV_474/SAV474 from Streptomyces avermitilis (strain ATCC 31267 / DSM 46492 / JCM 5070 / NBRC 14893 / NCIMB 12804 / NRRL 8165 / MA-4680).